The primary structure comprises 128 residues: Large ribosomal subunit protein eL8 (128 aa).

This sequence belongs to the eukaryotic ribosomal protein eL8 family. Part of the 50S ribosomal subunit. Probably part of the RNase P complex.

The protein resides in the cytoplasm. In terms of biological role, multifunctional RNA-binding protein that recognizes the K-turn motif in ribosomal RNA, the RNA component of RNase P, box H/ACA, box C/D and box C'/D' sRNAs. This chain is Large ribosomal subunit protein eL8, found in Nitrosopumilus maritimus (strain SCM1).